Consider the following 215-residue polypeptide: Rod-determining factor A (215 aa).

In terms of biological role, involved in cell-shape determination. Required for the formation of rods and wild-type-like motility. The polypeptide is Rod-determining factor A (Haloferax volcanii (strain ATCC 29605 / DSM 3757 / JCM 8879 / NBRC 14742 / NCIMB 2012 / VKM B-1768 / DS2) (Halobacterium volcanii)).